Reading from the N-terminus, the 444-residue chain is D(2) dopamine receptor (444 aa).

The Extracellular portion of the chain corresponds to 1-37 (MDPLNLSWYDDDLERQNWSRPFNGSEGKADRPHYNYY). Residues Asn5, Asn17, and Asn23 are each glycosylated (N-linked (GlcNAc...) asparagine). The helical transmembrane segment at 38–60 (AMLLTLLIFIIVFGNVLVCMAVS) threads the bilayer. The Cytoplasmic portion of the chain corresponds to 61–70 (REKALQTTTN). A helical membrane pass occupies residues 71–93 (YLIVSLAVADLLVATLVMPWVVY). Over 94-108 (LEVVGEWKFSRIHCD) the chain is Extracellular. An intrachain disulfide couples Cys107 to Cys182. A helical membrane pass occupies residues 109–130 (IFVTLDVMMCTASILNLCAISI). Topologically, residues 131–151 (DRYTAVAMPMLYNTRYSSKRR) are cytoplasmic. The chain crosses the membrane as a helical span at residues 152-172 (VTVMIAIVWVLSFTISCPLLF). Over 173-188 (GLNNTDQNECIIANPA) the chain is Extracellular. The chain crosses the membrane as a helical span at residues 189–213 (FVVYSSIVSFYVPFIVTLLVYIKIY). The tract at residues 211-374 (KIYIVLRKRR…SQQKEKKATQ (164 aa)) is interaction with PPP1R9B. Topologically, residues 214-374 (IVLRKRRKRV…SQQKEKKATQ (161 aa)) are cytoplasmic. Residues 282–329 (EMLSSTSPPERTRYSPIPPSHHQLTLPDPSHHGLHSNPDSPAKPEKNG) are disordered. The chain crosses the membrane as a helical span at residues 375-396 (MLAIVLGVFIICWLPFFITHIL). The Extracellular segment spans residues 397–410 (NIHCDCNIPPVLYS). Residues Cys400 and Cys402 are joined by a disulfide bond. The chain crosses the membrane as a helical span at residues 411–432 (AFTWLGYVNSAVNPIIYTTFNI). The Cytoplasmic segment spans residues 433–444 (EFRKAFMKILHC). Cys444 is lipidated: S-palmitoyl cysteine.

It belongs to the G-protein coupled receptor 1 family. In terms of assembly, forms homo- and heterooligomers with DRD4. The interaction with DRD4 may modulate agonist-induced downstream signaling. Interacts with CADPS and CADPS2. Interacts with GPRASP1, PPP1R9B and CLIC6. Interacts with ARRB2. Interacts with HTR2A. Interacts with DRD1. Interacts with KCNA2. In terms of processing, palmitoylated. Palmitoylation which is required for proper localization to the plasma membrane and stability of the receptor could be carried on by ZDHHC4, ZDHHC3 and ZDHHC8. In terms of tissue distribution, expressed in the anterior lobe of the pituitary gland. Expressed ventral tegmental area of the midbrain and the pars compacta of the substantia nigra. Expressed seven times more than isoform short in the caudate nucleus. As to expression, expressed in the anterior lobe of the pituitary gland. Expressed in the caudate nucleus. Not expressed in the wider brain.

The protein localises to the cell membrane. It localises to the golgi apparatus membrane. Dopamine receptor whose activity is mediated by G proteins which inhibit adenylyl cyclase. Positively regulates postnatal regression of retinal hyaloid vessels via suppression of VEGFR2/KDR activity, downstream of OPN5. This chain is D(2) dopamine receptor (Drd2), found in Rattus norvegicus (Rat).